The following is a 188-amino-acid chain: Pro-adrenomedullin (188 aa).

Residues 1 to 21 form the signal peptide; the sequence is MKLVPVALMYLGSLAFLGADT. At R41 the chain carries Arginine amide. A propeptide spanning residues 45–92 is cleaved from the precursor; sequence ELRLSSSYPTGIADLKAGPAQTVIRPQDVKGSSRSPQASIPDAARIRV. Residues C110 and C115 are joined by a disulfide bond. The segment at 131 to 177 is disordered; sequence DKDGVAPRSKISPQGYGRRRRRSLPEASLGRTLRSQEPQAHGAPASP. Residue Y146 is modified to Tyrosine amide. The propeptide at 153-188 is preproAM C-terminal fragment; sequence SLPEASLGRTLRSQEPQAHGAPASPAHQVLATLFRI.

Belongs to the adrenomedullin family. Highly expressed in adrenal glands, lung and kidney.

The protein localises to the secreted. Functionally, adrenomedullin/ADM and proadrenomedullin N-20 terminal peptide/PAMP are peptide hormones that act as potent hypotensive and vasodilatator agents. Numerous actions have been reported most related to the physiologic control of fluid and electrolyte homeostasis. Its function is as follows. ADM function is mediated by the CALCRL-RAMP2 and CALCRL-RAMP3 receptor complexes with ADM showing the highest potency for the CALCRL-RAMP2 complex. This is Pro-adrenomedullin (ADM) from Sus scrofa (Pig).